A 263-amino-acid chain; its full sequence is Lens fiber major intrinsic protein (263 aa).

Over 1–9 (MWELRSASF) the chain is Cytoplasmic. Residues 10-29 (WRAIFAEFFATLFYVFFGLG) form a helical membrane-spanning segment. Residues 30-41 (ASLRWAPGPLHV) are Extracellular-facing. A helical membrane pass occupies residues 42 to 59 (LQVALAFGLALATLVQAV). The Cytoplasmic segment spans residues 60-61 (GH). The segment at residues 62 to 77 (ISGAHVNPAVTFAFLV) is an intramembrane region (discontinuously helical). An NPA 1 motif is present at residues 68-70 (NPA). Residues 78 to 82 (GSQMS) are Cytoplasmic-facing. Residues 83–106 (LLRAICYMAAQLLGAVAGAAVLYS) form a helical membrane-spanning segment. Over 107–127 (VTPAAVRGNLALNTLHPGVSL) the chain is Extracellular. The helical transmembrane segment at 128 to 148 (GQATTVEIFLTLQFVLCIFAT) threads the bilayer. Residues 149 to 156 (YDERRNGR) are Cytoplasmic-facing. Residues 157–175 (LGSVALAVGFSLTLGHLFG) traverse the membrane as a helical segment. Residues 176–178 (MYY) are Extracellular-facing. An intramembrane region (discontinuously helical) is located at residues 179–193 (TGAGMNPARSFAPAI). The NPA 2 signature appears at 184-186 (NPA). Residues 194–200 (LTRNFTN) are Extracellular-facing. Residues 201–222 (HWVYWVGPIIGGGLASLLYDFL) form a helical membrane-spanning segment. The Cytoplasmic portion of the chain corresponds to 223–263 (LFPRLKSVSERLSILKGARPSDSNGQPEGTGEPVELKTQAL). Residues 227–237 (LKSVSERLSIL) form an interaction with CALM region. Residues S235, S243, and S245 each carry the phosphoserine modification. Residues 240–263 (ARPSDSNGQPEGTGEPVELKTQAL) are disordered. N246 is modified (deamidated asparagine).

It belongs to the MIP/aquaporin (TC 1.A.8) family. In terms of assembly, homotetramer; each monomer provides an independent water pore. Two homotetramers on opposing membranes can dimerize, forming a cell-cell junction. Interacts with CALM; the calcium-calmodulin/CALM complex interacts with the cytoplasmic domains of two aquaporins, leading to channel closure. Interacts with BFSP1 (via C-terminus); prevents calcium-dependent inhibition of the water channel activity. In terms of processing, subject to partial proteolytic cleavage in the eye lens core. Partial proteolysis promotes interactions between tetramers from adjoining membranes. Post-translationally, fatty acylated at Met-1 and Lys-238. The acyl modifications, in decreasing order of ion abundance, are: oleoyl (C18:1) &gt; palmitoyl (C16:0) &gt; stearoyl (C18:0) &gt; eicosenoyl (C20:1) &gt; dihomo-gamma-linolenoyl (C20:3) &gt; palmitoleoyl (C16:1) &gt; eicosadienoyl (C20:2).

Its subcellular location is the cell membrane. It is found in the cell junction. The enzyme catalyses H2O(in) = H2O(out). Its activity is regulated as follows. The water channel activity is inhibited by calcium through calmodulin/CALM. Functionally, aquaporins form homotetrameric transmembrane channels, with each monomer independently mediating water transport across the plasma membrane along its osmotic gradient. Specifically expressed in lens fiber cells, this aquaporin is crucial for maintaining lens water homeostasis and transparency. Beyond water permeability, it also acts as a cell-to-cell adhesion molecule, forming thin junctions between lens fiber cells that are essential for maintaining the ordered structure and transparency of the lens. The chain is Lens fiber major intrinsic protein from Oryctolagus cuniculus (Rabbit).